A 1915-amino-acid polypeptide reads, in one-letter code: Methylcytosine dioxygenase tet3-B (1915 aa).

The tract at residues 28 to 49 is disordered; the sequence is RLRVSEMPSELNGGGDGSKGDG. The CXXC-type zinc-finger motif lies at 61–102; that stretch reads SNKKRKRCGVCVPCLRKEPCGTCYNCVNRSTSHQICKMRKCE. Cys-68, Cys-71, Cys-74, Cys-80, Cys-83, Cys-86, Cys-96, and Cys-101 together coordinate Zn(2+). The span at 629–638 shows a compositional bias: polar residues; the sequence is PNSQQAPVSK. 3 disordered regions span residues 629-679, 776-806, and 831-880; these read PNSQ…RVKE, GRCP…VPGQ, and FSLP…LSNN. Over residues 664–676 the composition is skewed to basic residues; the sequence is KPPRKQVQIKKPR. Residues 779–793 show a composition bias toward low complexity; the sequence is PTPSTGDSSSGQGDS. 2 stretches are compositionally biased toward polar residues: residues 838–854 and 864–880; these read VPSQ…TSGV and QLPS…LSNN. Zn(2+)-binding residues include Cys-974, Cys-976, Cys-1034, His-1060, and Cys-1062. Arg-1102 lines the 2-oxoglutarate pocket. Residues Cys-1112, Cys-1114, Cys-1130, Cys-1139, and Cys-1199 each coordinate Zn(2+). Position 1215 (Cys-1215) interacts with 2-oxoglutarate. Residue His-1221 participates in Zn(2+) binding. Residues His-1223 and Asp-1225 each contribute to the Fe cation site. His-1257 contributes to the 2-oxoglutarate binding site. Disordered regions lie at residues 1298 to 1356, 1469 to 1516, and 1719 to 1753; these read LSEP…QTKP, GMNQ…APME, and PAVN…VKEE. The span at 1308-1339 shows a compositional bias: basic and acidic residues; that stretch reads RQLDAKKATAEKKKLQKEKLVSPDKTKQEPSD. Over residues 1340–1355 the composition is skewed to polar residues; it reads TKTCQQNPGVPQQQTK. Positions 1482 to 1491 are enriched in basic and acidic residues; sequence NYRRSSEVPH. Polar residues-rich tracts occupy residues 1494–1503 and 1720–1732; these read SLQNSNSQKS and AVNS…SQNH. His-1794 provides a ligand contact to Fe cation. 1809 to 1811 serves as a coordination point for 2-oxoglutarate; the sequence is RIS. Residues 1827–1860 adopt a coiled-coil conformation; that stretch reads LALWEAKMKQLAERARVKEEEAAKLGIKQEVKSL.

This sequence belongs to the TET family. Requires Fe(2+) as cofactor. Zn(2+) is required as a cofactor. Detected in embryo (at protein level). Detected in embryonic head, in developing brain and eye.

It is found in the nucleus. It localises to the chromosome. It catalyses the reaction a 5-methyl-2'-deoxycytidine in DNA + 2-oxoglutarate + O2 = a 5-hydroxymethyl-2'-deoxycytidine in DNA + succinate + CO2. The enzyme catalyses a 5-hydroxymethyl-2'-deoxycytidine in DNA + 2-oxoglutarate + O2 = a 5-formyl-2'-deoxycytidine in DNA + succinate + CO2 + H2O. The catalysed reaction is a 5-formyl-2'-deoxycytidine in DNA + 2-oxoglutarate + O2 = a 5-carboxyl-2'-deoxycytidine in DNA + succinate + CO2 + H(+). Its function is as follows. Dioxygenase that catalyzes the conversion of the modified genomic base 5-methylcytosine (5mC) into 5-hydroxymethylcytosine (5hmC) and plays a key role in epigenetic chromatin reprogramming during embryonic development. Conversion of 5mC into 5hmC probably constitutes the first step in cytosine demethylation. Selectively binds to the promoter region of target genes and contributes to regulate the expression of numerous developmental genes, including pax6, rax, sox9 and six3. May also contribute to the regulation of target genes in ways that do not require its enzyme activity. This is Methylcytosine dioxygenase tet3-B from Xenopus laevis (African clawed frog).